Here is a 103-residue protein sequence, read N- to C-terminus: Histone H4 (103 aa).

Positions 1-14 (MSGRGKGGKGLGKG) are enriched in gly residues. Positions 1-20 (MSGRGKGGKGLGKGGAKRHR) are disordered. The residue at position 6 (Lys-6) is an N6-acetyl-N6-methyllysine; alternate. 3 positions are modified to N6-methyllysine; alternate: Lys-6, Lys-9, and Lys-13. N6-acetyl-N6-methyllysine; alternate is present on Lys-13. Residues 17–21 (KRHRK) mediate DNA binding. The residue at position 92 (Lys-92) is an N6-glutaryllysine.

The protein belongs to the histone H4 family. The nucleosome is a histone octamer containing two molecules each of H2A, H2B, H3 and H4 assembled in one H3-H4 heterotetramer and two H2A-H2B heterodimers. The octamer wraps approximately 147 bp of DNA. In terms of processing, glutarylation at Lys-92 (H4K91glu) destabilizes nucleosomes by promoting dissociation of the H2A-H2B dimers from nucleosomes.

It is found in the nucleus. The protein resides in the chromosome. In terms of biological role, core component of nucleosome. Nucleosomes wrap and compact DNA into chromatin, limiting DNA accessibility to the cellular machineries which require DNA as a template. Histones thereby play a central role in transcription regulation, DNA repair, DNA replication and chromosomal stability. DNA accessibility is regulated via a complex set of post-translational modifications of histones, also called histone code, and nucleosome remodeling. The polypeptide is Histone H4 (HHF1) (Candida glabrata (strain ATCC 2001 / BCRC 20586 / JCM 3761 / NBRC 0622 / NRRL Y-65 / CBS 138) (Yeast)).